The sequence spans 402 residues: D-galactonate dehydratase family member EGBG_02030 (402 aa).

Position 207 (aspartate 207) interacts with Mg(2+). Histidine 209 lines the D-arabinonate pocket. Mg(2+)-binding residues include glutamate 233 and glutamate 259. The D-arabinonate site is built by glutamate 259, arginine 280, histidine 309, and glutamate 336.

The protein belongs to the mandelate racemase/muconate lactonizing enzyme family. GalD subfamily.

Has no detectable activity with D-mannonate and with a panel of 70 other acid sugars (in vitro), in spite of the conservation of the residues that are expected to be important for catalytic activity and cofactor binding. May have evolved a divergent function. The polypeptide is D-galactonate dehydratase family member EGBG_02030 (Enterococcus gallinarum (strain EG2)).